The primary structure comprises 449 residues: Serum response factor homolog (449 aa).

The tract at residues 23-166 (LADPADMYGN…PPANGKKTKG (144 aa)) is disordered. Positions 69–80 (QCQTLHSPQHAS) are enriched in polar residues. Low complexity predominate over residues 81-107 (QQQQQQQQQQQQHQQQQQQQQQHPQQQ). S156 carries the phosphoserine modification. In terms of domain architecture, MADS-box spans 167–225 (RVKIKMEYIDNKLRRYTTFSKRKTGIMKKAYELSTLTGTQVMLLVASETGHVYTFATRK). 2 disordered regions span residues 270–360 (YNIA…GGGS) and 418–449 (LTAS…QEFD). Composition is skewed to low complexity over residues 317-331 (SAPP…TASS) and 345-354 (TNSGPSTSTA).

In terms of tissue distribution, after germ band retraction, high levels of zygotic expression are observed in a distinct subset of peripheral tracheal cells distributed throughout the embryo and low levels in somatic muscle. Expressed in the future intervein tissue of the wing imaginal disk from the third instar larvae until eclosion of the adult fly (at protein level).

It localises to the nucleus. Functionally, required for the formation of intervein tissue of the wing. Acts in a dosage-dependent manner to suppress wing vein formation and promote development of intervein cells. Might play a role in the proper formation and maintenance of the trachea. In Drosophila melanogaster (Fruit fly), this protein is Serum response factor homolog (bs).